The chain runs to 170 residues: Lipoprotein signal peptidase (170 aa).

A run of 3 helical transmembrane segments spans residues 12–32, 67–87, and 93–113; these read WYWV…WVLA, WQRW…TVWL, and SLLK…GNLV. Active-site residues include D123 and D141. The chain crosses the membrane as a helical span at residues 137–157; it reads FNIADSAIFIGAVLIIWDSFF.

It belongs to the peptidase A8 family.

The protein localises to the cell inner membrane. It carries out the reaction Release of signal peptides from bacterial membrane prolipoproteins. Hydrolyzes -Xaa-Yaa-Zaa-|-(S,diacylglyceryl)Cys-, in which Xaa is hydrophobic (preferably Leu), and Yaa (Ala or Ser) and Zaa (Gly or Ala) have small, neutral side chains.. Its pathway is protein modification; lipoprotein biosynthesis (signal peptide cleavage). In terms of biological role, this protein specifically catalyzes the removal of signal peptides from prolipoproteins. In Shewanella oneidensis (strain ATCC 700550 / JCM 31522 / CIP 106686 / LMG 19005 / NCIMB 14063 / MR-1), this protein is Lipoprotein signal peptidase.